The chain runs to 215 residues: 3-isopropylmalate dehydratase small subunit (215 aa).

This sequence belongs to the LeuD family. LeuD type 1 subfamily. As to quaternary structure, heterodimer of LeuC and LeuD.

The catalysed reaction is (2R,3S)-3-isopropylmalate = (2S)-2-isopropylmalate. The protein operates within amino-acid biosynthesis; L-leucine biosynthesis; L-leucine from 3-methyl-2-oxobutanoate: step 2/4. Catalyzes the isomerization between 2-isopropylmalate and 3-isopropylmalate, via the formation of 2-isopropylmaleate. The sequence is that of 3-isopropylmalate dehydratase small subunit from Xanthomonas axonopodis pv. citri (strain 306).